A 147-amino-acid polypeptide reads, in one-letter code: UPF0208 membrane protein SO_2914 (147 aa).

The next 2 helical transmembrane spans lie at 40-60 (LAIL…LYTY) and 68-88 (ALTI…WLGW).

This sequence belongs to the UPF0208 family.

Its subcellular location is the cell inner membrane. The polypeptide is UPF0208 membrane protein SO_2914 (Shewanella oneidensis (strain ATCC 700550 / JCM 31522 / CIP 106686 / LMG 19005 / NCIMB 14063 / MR-1)).